Here is a 314-residue protein sequence, read N- to C-terminus: Porphobilinogen deaminase (314 aa).

Position 241 is an S-(dipyrrolylmethanemethyl)cysteine (cysteine 241).

This sequence belongs to the HMBS family. As to quaternary structure, monomer. It depends on dipyrromethane as a cofactor.

The enzyme catalyses 4 porphobilinogen + H2O = hydroxymethylbilane + 4 NH4(+). It participates in porphyrin-containing compound metabolism; protoporphyrin-IX biosynthesis; coproporphyrinogen-III from 5-aminolevulinate: step 2/4. It functions in the pathway porphyrin-containing compound metabolism; chlorophyll biosynthesis. Its function is as follows. Tetrapolymerization of the monopyrrole PBG into the hydroxymethylbilane pre-uroporphyrinogen in several discrete steps. This is Porphobilinogen deaminase from Chloroherpeton thalassium (strain ATCC 35110 / GB-78).